The primary structure comprises 470 residues: UDP-N-acetylmuramoylalanine--D-glutamate ligase (470 aa).

121 to 127 contacts ATP; the sequence is GTNGKST.

It belongs to the MurCDEF family.

Its subcellular location is the cytoplasm. It catalyses the reaction UDP-N-acetyl-alpha-D-muramoyl-L-alanine + D-glutamate + ATP = UDP-N-acetyl-alpha-D-muramoyl-L-alanyl-D-glutamate + ADP + phosphate + H(+). Its pathway is cell wall biogenesis; peptidoglycan biosynthesis. In terms of biological role, cell wall formation. Catalyzes the addition of glutamate to the nucleotide precursor UDP-N-acetylmuramoyl-L-alanine (UMA). In Rhizobium etli (strain ATCC 51251 / DSM 11541 / JCM 21823 / NBRC 15573 / CFN 42), this protein is UDP-N-acetylmuramoylalanine--D-glutamate ligase.